Consider the following 841-residue polypeptide: Probable outer membrane usher protein EcpC (841 aa).

A signal peptide spans 1–29 (MPLRRFSPGLKAQFAFGMVFLFVQPDASA).

Belongs to the EcpC/MatD family.

In terms of biological role, part of the ecpRABCDE operon, which encodes the E.coli common pilus (ECP). ECP is found in both commensal and pathogenic strains and plays a dual role in early-stage biofilm development and host cell recognition. The chain is Probable outer membrane usher protein EcpC (ecpC) from Escherichia coli O157:H7.